The chain runs to 135 residues: Small ribosomal subunit protein eS24A (135 aa).

Residue serine 2 is modified to N-acetylserine. Serine 14 is modified (phosphoserine). Lysine 21 is covalently cross-linked (Glycyl lysine isopeptide (Lys-Gly) (interchain with G-Cter in ubiquitin)). Serine 56 is subject to Phosphoserine. A disordered region spans residues 102-135 (KASRQQRKQKKNRDKKIFGTGKRLAKKVARRNAD). Basic residues-rich tracts occupy residues 105–115 (RQQRKQKKNRD) and 124–135 (RLAKKVARRNAD).

This sequence belongs to the eukaryotic ribosomal protein eS24 family. As to quaternary structure, component of the small ribosomal subunit (SSU). Mature yeast ribosomes consist of a small (40S) and a large (60S) subunit. The 40S small subunit contains 1 molecule of ribosomal RNA (18S rRNA) and 33 different proteins (encoded by 57 genes). The large 60S subunit contains 3 rRNA molecules (25S, 5.8S and 5S rRNA) and 46 different proteins (encoded by 81 genes). In terms of processing, N-terminally acetylated by acetyltransferase NatA. Also partially acetylated by NatC.

Its subcellular location is the cytoplasm. In terms of biological role, component of the ribosome, a large ribonucleoprotein complex responsible for the synthesis of proteins in the cell. The small ribosomal subunit (SSU) binds messenger RNAs (mRNAs) and translates the encoded message by selecting cognate aminoacyl-transfer RNA (tRNA) molecules. The large subunit (LSU) contains the ribosomal catalytic site termed the peptidyl transferase center (PTC), which catalyzes the formation of peptide bonds, thereby polymerizing the amino acids delivered by tRNAs into a polypeptide chain. The nascent polypeptides leave the ribosome through a tunnel in the LSU and interact with protein factors that function in enzymatic processing, targeting, and the membrane insertion of nascent chains at the exit of the ribosomal tunnel. The sequence is that of Small ribosomal subunit protein eS24A from Saccharomyces cerevisiae (strain ATCC 204508 / S288c) (Baker's yeast).